A 286-amino-acid polypeptide reads, in one-letter code: MAGAKEIRSKIASIKSTQKITSAMEKVAVSKMRKAQMRMAASRPYAERIRQVIGHLANANPEYRHPFMIDREVKRVGYVVVSSDRGLCGGLNTNLFKALVKDMAVNRENGVEIDLCVVGSKGAAFFRNFGGNVVAAISHLGEEPSINDLIGSVKVMLDAYLDGRIDRLSVVSNKFINTMTQQPTVEQLIPLVATPDQELKHHWDYLYEPDAKELLDGLMVRYVESQVYQAVVENNAAEQAARMIAMKNATDNAGDLISDLQLIYNKARQAAITQEISEIVGGAAAV.

Belongs to the ATPase gamma chain family. As to quaternary structure, F-type ATPases have 2 components, CF(1) - the catalytic core - and CF(0) - the membrane proton channel. CF(1) has five subunits: alpha(3), beta(3), gamma(1), delta(1), epsilon(1). CF(0) has three main subunits: a, b and c.

It localises to the cell inner membrane. Functionally, produces ATP from ADP in the presence of a proton gradient across the membrane. The gamma chain is believed to be important in regulating ATPase activity and the flow of protons through the CF(0) complex. The sequence is that of ATP synthase gamma chain from Pseudomonas fluorescens (strain Pf0-1).